The following is a 205-amino-acid chain: Methylthioribulose-1-phosphate dehydratase (205 aa).

Zn(2+) is bound by residues His96 and His98.

Belongs to the aldolase class II family. MtnB subfamily. Requires Zn(2+) as cofactor.

It catalyses the reaction 5-(methylsulfanyl)-D-ribulose 1-phosphate = 5-methylsulfanyl-2,3-dioxopentyl phosphate + H2O. It functions in the pathway amino-acid biosynthesis; L-methionine biosynthesis via salvage pathway; L-methionine from S-methyl-5-thio-alpha-D-ribose 1-phosphate: step 2/6. In terms of biological role, catalyzes the dehydration of methylthioribulose-1-phosphate (MTRu-1-P) into 2,3-diketo-5-methylthiopentyl-1-phosphate (DK-MTP-1-P). This chain is Methylthioribulose-1-phosphate dehydratase, found in Pseudomonas paraeruginosa (strain DSM 24068 / PA7) (Pseudomonas aeruginosa (strain PA7)).